The primary structure comprises 255 residues: uncharacterized protein (255 aa).

Positions 1 to 23 (MKRLNKLVLGINLLFLVISITAG) are cleaved as a signal peptide. Cys24 is lipidated: N-palmitoyl cysteine. Cys24 carries the S-diacylglycerol cysteine lipid modification.

The protein belongs to the staphylococcal tandem lipoprotein family.

Its subcellular location is the cell membrane. This is an uncharacterized protein from Staphylococcus aureus (strain MRSA252).